The primary structure comprises 52 residues: Alpha-crystallin B chain (52 aa).

This sequence belongs to the small heat shock protein (HSP20) family. In terms of assembly, homodimer. Aggregates with homologous proteins, including alpha-A-crystallin and the small heat shock protein HSPB1, to form large heteromeric complexes.

Its function is as follows. May contribute to the transparency and refractive index of the lens. This Trachemys scripta elegans (Red-eared slider turtle) protein is Alpha-crystallin B chain (CRYAB).